The following is a 349-amino-acid chain: Protein FAM98C (349 aa).

The disordered stretch occupies residues 313-349 (PDRGGRPNELEPPMPTWRSRREDGGPQCWGRKKKKKK).

This sequence belongs to the FAM98 family.

The chain is Protein FAM98C (FAM98C) from Homo sapiens (Human).